Consider the following 274-residue polypeptide: Thiazole synthase (274 aa).

Residue Lys115 is the Schiff-base intermediate with DXP of the active site. 1-deoxy-D-xylulose 5-phosphate-binding positions include Gly176, Ala202–Gly203, and Asn224–Ser225.

Belongs to the ThiG family. Homotetramer. Forms heterodimers with either ThiH or ThiS.

It localises to the cytoplasm. It carries out the reaction [ThiS sulfur-carrier protein]-C-terminal-Gly-aminoethanethioate + 2-iminoacetate + 1-deoxy-D-xylulose 5-phosphate = [ThiS sulfur-carrier protein]-C-terminal Gly-Gly + 2-[(2R,5Z)-2-carboxy-4-methylthiazol-5(2H)-ylidene]ethyl phosphate + 2 H2O + H(+). The protein operates within cofactor biosynthesis; thiamine diphosphate biosynthesis. Catalyzes the rearrangement of 1-deoxy-D-xylulose 5-phosphate (DXP) to produce the thiazole phosphate moiety of thiamine. Sulfur is provided by the thiocarboxylate moiety of the carrier protein ThiS. In vitro, sulfur can be provided by H(2)S. This Parasynechococcus marenigrum (strain WH8102) protein is Thiazole synthase.